A 638-amino-acid polypeptide reads, in one-letter code: Nucleolar protein 4 (638 aa).

Disordered regions lie at residues 210–312 (QQDE…SPLS), 343–403 (EREA…TDGV), 503–535 (NAAK…TYST), and 573–603 (SSGP…QLSP). The span at 211 to 225 (QDEDESSIESDEFDM) shows a compositional bias: acidic residues. 4 stretches are compositionally biased toward polar residues: residues 229-254 (TRMS…NLHG), 263-281 (ESFN…SGGT), 302-312 (QPLNLSDSPLS), and 351-363 (SKSP…SYDS). 3 stretches are compositionally biased toward basic and acidic residues: residues 364-374 (GKNESVDRGAE), 391-403 (HDDS…TDGV), and 503-515 (NAAK…RQQD). The segment covering 588–597 (SSGSSSSSNS) has biased composition (low complexity).

Expressed predominantly in fetal brain, adult brain and testis.

Its subcellular location is the nucleus. The protein localises to the nucleolus. This is Nucleolar protein 4 (NOL4) from Homo sapiens (Human).